We begin with the raw amino-acid sequence, 250 residues long: Carboxy-S-adenosyl-L-methionine synthase (250 aa).

S-adenosyl-L-methionine-binding positions include Y45, 70–72 (GCS), 95–96 (DN), 123–124 (DI), N138, and R205.

Belongs to the class I-like SAM-binding methyltransferase superfamily. Cx-SAM synthase family. Homodimer.

The catalysed reaction is prephenate + S-adenosyl-L-methionine = carboxy-S-adenosyl-L-methionine + 3-phenylpyruvate + H2O. Functionally, catalyzes the conversion of S-adenosyl-L-methionine (SAM) to carboxy-S-adenosyl-L-methionine (Cx-SAM). This Marinobacter nauticus (strain ATCC 700491 / DSM 11845 / VT8) (Marinobacter aquaeolei) protein is Carboxy-S-adenosyl-L-methionine synthase.